The primary structure comprises 144 residues: Eukaryotic translation initiation factor 1A, Y-chromosomal (144 aa).

The span at 1-15 (MPKNKGKGGKNRRRG) shows a compositional bias: basic residues. The tract at residues 1-26 (MPKNKGKGGKNRRRGKNENESEKREL) is disordered. Basic and acidic residues predominate over residues 16-26 (KNENESEKREL). Positions 22–96 (EKRELVFKED…NKADVILKYN (75 aa)) constitute an S1-like domain. Lys-88 is covalently cross-linked (Glycyl lysine isopeptide (Lys-Gly) (interchain with G-Cter in ubiquitin)). Positions 114 to 144 (KINETDTFGPGDDDEIQFDDIGDDDEDIDDI) are disordered. Residues 124 to 144 (GDDDEIQFDDIGDDDEDIDDI) are compositionally biased toward acidic residues.

The protein belongs to the eIF-1A family. Component of the 43S pre-initiation complex (43S PIC), which is composed of the 40S ribosomal subunit, EIF1, eIF1A (EIF1AX), eIF3 complex, EIF5 and eIF2-GTP-initiator tRNA complex (eIF2 ternary complex). Interacts with EIF5; this interaction contributes to the maintenance of EIF1 within the open 43S PIC. Interacts through its C-terminal domain (CTD) with the CTD of EIF5B; from the location of the start codon by the 43S complex until the formation of the 80S complex. Ubiquitous.

It localises to the cytoplasm. Component of the 43S pre-initiation complex (43S PIC), which binds to the mRNA cap-proximal region, scans mRNA 5'-untranslated region, and locates the initiation codon. This protein enhances formation of the cap-proximal complex. Together with EIF1, facilitates scanning, start codon recognition, promotion of the assembly of 48S complex at the initiation codon (43S PIC becomes 48S PIC after the start codon is reached), and dissociation of aberrant complexes. After start codon location, together with EIF5B orients the initiator methionine-tRNA in a conformation that allows 60S ribosomal subunit joining to form the 80S initiation complex. Is released after 80S initiation complex formation, just after GTP hydrolysis by EIF5B, and before release of EIF5B. Its globular part is located in the A site of the 40S ribosomal subunit. Its interaction with EIF5 during scanning contribute to the maintenance of EIF1 within the open 43S PIC. In contrast to yeast orthologs, does not bind EIF1. In Homo sapiens (Human), this protein is Eukaryotic translation initiation factor 1A, Y-chromosomal (EIF1AY).